Here is a 309-residue protein sequence, read N- to C-terminus: Manganese-dependent inorganic pyrophosphatase (309 aa).

Residues His-9, Asp-13, Asp-15, Asp-75, His-97, and Asp-149 each contribute to the Mn(2+) site.

As to quaternary structure, homodimer. It depends on Mn(2+) as a cofactor.

The protein localises to the cytoplasm. It carries out the reaction diphosphate + H2O = 2 phosphate + H(+). This is Manganese-dependent inorganic pyrophosphatase (ppaC) from Bacillus subtilis (strain 168).